The sequence spans 323 residues: Aquaporin-4 (323 aa).

Residues 1–36 (MSDRPTARRWGKCGPLCTRENIMVAFKGVWTQAFWK) lie on the Cytoplasmic side of the membrane. S-palmitoyl cysteine attachment occurs at residues Cys13 and Cys17. The chain crosses the membrane as a helical span at residues 37–57 (AVTAEFLAMLIFVLLSLGSTI). Residues 58–69 (NWGGTEKPLPVD) are Extracellular-facing. The helical transmembrane segment at 70-89 (MVLISLCFGLSIATMVQCFG) threads the bilayer. Topologically, residues 90–93 (HISG) are cytoplasmic. The discontinuously helical intramembrane region spans 94-101 (GHINPAVT). The NPA 1 motif lies at 97–99 (NPA). At 102 to 115 (VAMVCTRKISIAKS) the chain is on the cytoplasmic side. Phosphoserine; by PKG is present on Ser111. The helical transmembrane segment at 116–136 (VFYIAAQCLGAIIGAGILYLV) threads the bilayer. At 137-155 (TPPSVVGGLGVTMVHGNLT) the chain is on the extracellular side. N-linked (GlcNAc...) asparagine glycosylation is present at Asn153. Residues 156 to 176 (AGHGLLVELIITFQLVFTIFA) form a helical membrane-spanning segment. Over 177–184 (SCDSKRTD) the chain is Cytoplasmic. At Ser180 the chain carries Phosphoserine; by PKC. A helical transmembrane segment spans residues 185–205 (VTGSIALAIGFSVAIGHLFAI). A glycan (N-linked (GlcNAc...) asparagine) is linked at Asn206. Topologically, residues 206–208 (NYT) are extracellular. The segment at residues 209–222 (GASMNPARSFGPAV) is an intramembrane region (discontinuously helical). The short motif at 213-215 (NPA) is the NPA 2 element. The Extracellular portion of the chain corresponds to 223 to 231 (IMGNWENHW). Residues 232–252 (IYWVGPIIGAVLAGGLYEYVF) form a helical membrane-spanning segment. Residues 253 to 323 (CPDVEFKRRF…DQSGEVLSSV (71 aa)) lie on the Cytoplasmic side of the membrane. Ser276 and Ser285 each carry phosphoserine. Thr289 bears the Phosphothreonine mark. The residue at position 321 (Ser321) is a Phosphoserine.

It belongs to the MIP/aquaporin (TC 1.A.8) family. Homotetramer. The tetramers can form oligomeric arrays in membranes. The size of the oligomers differs between tissues and is smaller in skeletal muscle than in brain. Interaction between AQP4 oligomeric arrays in close-by cells can contribute to cell-cell adhesion. Part of a complex containing MLC1, TRPV4, HEPACAM and ATP1B1. In terms of processing, phosphorylation by PKC at Ser-180 reduces conductance by 50%. Phosphorylation by PKG at Ser-111 in response to glutamate increases conductance by 40%. Isoform 2: Palmitoylated on its N-terminal region. Isoform 1: Not palmitoylated. As to expression, detected in skeletal muscle. Detected in stomach, along the glandular base region of the fundic gland (at protein level). Detected in brain, lung and skeletal muscle, and at much lower levels in heart and ovary.

It is found in the cell membrane. Its subcellular location is the basolateral cell membrane. The protein resides in the endosome membrane. The protein localises to the sarcolemma. It localises to the cell projection. The enzyme catalyses H2O(in) = H2O(out). Functionally, forms a water-specific channel. Plays an important role in brain water homeostasis. It is involved in glymphatic solute transport and is required for a normal rate of water exchange across the blood brain interface. Required for normal levels of cerebrospinal fluid influx into the brain cortex and parenchyma along paravascular spaces that surround penetrating arteries, and for normal drainage of interstitial fluid along paravenous drainage pathways. Thereby, it is required for normal clearance of solutes from the brain interstitial fluid, including soluble beta-amyloid peptides derived from APP. Plays a redundant role in urinary water homeostasis and urinary concentrating ability. The protein is Aquaporin-4 (AQP4) of Homo sapiens (Human).